The primary structure comprises 160 residues: Transcription elongation factor GreA (160 aa).

A coiled-coil region spans residues serine 49–isoleucine 77.

The protein belongs to the GreA/GreB family.

Necessary for efficient RNA polymerase transcription elongation past template-encoded arresting sites. The arresting sites in DNA have the property of trapping a certain fraction of elongating RNA polymerases that pass through, resulting in locked ternary complexes. Cleavage of the nascent transcript by cleavage factors such as GreA or GreB allows the resumption of elongation from the new 3'terminus. GreA releases sequences of 2 to 3 nucleotides. This Leuconostoc mesenteroides subsp. mesenteroides (strain ATCC 8293 / DSM 20343 / BCRC 11652 / CCM 1803 / JCM 6124 / NCDO 523 / NBRC 100496 / NCIMB 8023 / NCTC 12954 / NRRL B-1118 / 37Y) protein is Transcription elongation factor GreA.